The sequence spans 2596 residues: MSTKAEQFASKIRYLQEYHNRVLHNIYPVPSGTDIANTLKYFSQTLLSILSRTGKKENQDASNLTVPMTMCLFPVPFPLTPSLRPQVSSINPTVTRSLLYSVLRDAPSERGPQSRDAQLSDYPSLDYQGLYVTLVTLLDLVPLLQHGQHDLGQSIFYTTTCLLPFLNDDVLSTLPYTMISTLATFPPFLHKDIIEYLSTSFLPMAILGSSGREGVPAHVNLSASSMLMIAMQYTSNPVYHCQLLECLMKYKQEVWKDLLYVIAYGPSQVKPPAVQMLFHYWPNLKPPGAISEYRGLQYTAWNPIHCQHIECHNAINKPAVKMCIDPSLSVALGDKPPPLYLCEECSERISGDHSEWLIDVLLPQAEISAICQKKNCSSHVRRAVVTCFSAGCCGRHGNRPVRYCKRCHSNHHSNEVGATAETHLYQTSPPPINTRECGAEELVCAVEAVISLLKEAEFHAEQREHELNRRRQLGLSSSHHSLDNTDFDNKDDDKHDQRLLSQFGIWFLVSLCTPSENTPTESLARLVAMVFQWFHSTAYMMDDEVGSLVEKLKPQFVTKWLKTVCDVRFDVMVMCLLPKPMEFARVGGYWDKSCSTVTQLKEGLNRILCLIPYNVISQSVWECIMPEWLEAIRTEVPDNQLKEFREVLSKMFDIELCPLPFSMEEMFGFISCRFTGYPSTVQEQALLWLHVLSELDITVPLQLLISMFSDGVNSVKELANQRKSRANELAGNLASRRVSVASDPGRRGQHNTLSPFHSPFQSPFRSPMRSPFRSPFKNFGHPGGRTIDFDCEDDDMNLNCFILMFDLLLKQMELQDDGITMGLEHSLSKDIISIINNVFQAPWGGSHSCQKDKKATECNLCQSSILCYQLACELLERLAPKEESRLVEPTDSLEDSLLSSRPEFILGPEGEEEENPAAKHGENPGNRTVPSEHAAIKNDTERKFCYQQLPVTLRLIYTIFQEMAKFEEPDILFNMLNCLKILCLHGECLYTARKDHPQFLAYIQDHMLIASLWRVVKSEFSQLSSLAVPLLLHALSLPHGADIFWTIINGNFNSKDWKMRFEAVEKVAVICRFLDIHSVTKNHLLKYSLAHAFCCFLTAVEDVNPAVATRAGLLLDTIKRPALQGLCLCLDFQFDTVVKDRPTILSKLLLLHFLKQDIPALSWEFFVNRFETLSLEAQLHLDCNKEFPFPTTITAVRTNVANLSDAALWKIKRARFARNRQKSVRSLRDSVKGPAESKRALSLPETLTSKIRQQSPENDNTIKDLLPEDAGIDHQTVHQLITVLMKFMARDESSAESDISSAKAFNTVKRHLYVLLGYDQQEGCFMIAPQKMRLSTCFNAFIAGIAQVMDYNINLGKHLLPLVVQVLKYCSCPQLRHYFQQPPRCSLWSLKPHIRQMWLKALLVILYKYPYRDCDVSKTLLHLIHITVNTLNAQYHSCKPHATAGPLYTDNSNISRYSEKEKGEIELAEYRETGALQDSVLHCVREESIQKKKLRSLKQKSLDIGNADSLLFTLDEHRRKSCIDRCDIDKPPAQAAYISQRQNDHHGRSRQNSATRPDNTEIPKNPGTEGFQEIRRPVIPEVRLNCMETFEVRVDSPGKPAPREDLDLIDLSSDSTSGPEKHSILSTSDSDSLVFEPLPPLRIVESDEEEEMMNQGNGGALGNNAASSPSIPSQPSVLSLSTTPLVQVSVEDCSKDFSSKDSGNHQSASNEDSTIAALDDLTDSEELSKSEELREFASGSPLTLKQKRDLLQKSSAVPEMSVDYNPEPSPAEEKPGQTPTSGVKTVLLKVPEDGENLIESEKPNTSAESDTEQNPERKVEEDGAEESEFKIQIVPRQRKQRKIAVSAIQREYLDISFNILDKLGEQKDPDPSAKGLSTLEMPRESSSAPTLEAGAPETSSHSSISKQIQPGKRQCNVPMCLNPDLEGQPLRTRGATKSSLLSAPSIASMFVPAPEEFTEEQPTVMADKCHDCGAILEEYDEETLGLAIVVLSTFIHLSPDLAAPLLLDIMQSVGRLASSTTFSNQAESMMVPGNAAGVAKQFLRCIFHQLAPNGIFPQLFQSAIKDGTFLRTLATSLMDFNELSSIAALSQLLEGLNNKKNLPAGGAMIRCLENIATFMEALPMDSPSSLWTTISNQFQTFFAKLPCVLPLKCSLDSSLRIMICLLKIPSTNATRSLLEPFSKLLSFVIQNAVFTLAYLVELCGLCYRAFTKERDKFYLSRSVVLELLQALKLKSPLPDTNLLLLVQFICADAGTKLAESTILSKQMIASVPGCGTAAMECIRQYVSEVLEFMADMHTLTKLKSHMKTCSQPLHEDTFGGHLKVGLAQIAAMEISRGNHRDNKAVIRYLPWLYHPPSAMQQGPKEFIECVSHIRLLSWLLLGSLTHNAVCPNASSPCLPIPLDAGSHIADHLIVILIGFPEQSKTCVLHMCSLFHAFIFAQLWTVYCEQSAVATNVQNQNEFSFTAILTALEFWSRVTPSILQLMAHNKVMVEMVCLHVISLMEALQECNSTIFVKLIPMWLPMIQSNTKHLSAGLQLRLQAIQNNVNHHSLRTLPGSGQSSAGLAALRKWLQCTQFKMAQVEIQSSEAASQFYPL.

Phosphoserine is present on residues Ser754 and Ser758. Disordered regions lie at residues 907-931, 1539-1573, 1594-1632, 1648-1679, 1695-1832, and 1863-1909; these read GPEG…TVPS, SQRQ…GFQE, VDSP…DSDS, EEEE…SVLS, KDFS…FKIQ, and LGEQ…KQIQ. Basic and acidic residues predominate over residues 1594–1606; that stretch reads VDSPGKPAPREDL. The span at 1662–1679 shows a compositional bias: low complexity; it reads GNNAASSPSIPSQPSVLS. The span at 1704-1713 shows a compositional bias: polar residues; sequence NHQSASNEDS. Residues 1726 to 1735 are compositionally biased toward basic and acidic residues; that stretch reads ELSKSEELRE. The segment covering 1897 to 1908 has biased composition (polar residues); the sequence is ETSSHSSISKQI. The next 2 membrane-spanning stretches (helical) occupy residues 2184–2204 and 2426–2446; these read LLSF…ELCG and CVLH…WTVY.

This sequence belongs to the unc-79 family. NALCN complex consists of NALCN and auxiliary subunits, UNC79, UNC80 and NACL1. These auxiliary subunits are essential for the NALCN channel function. UNC80 bridges NALCN to UNC79. Interacts with NALCN. Interacts with UNC80.

The protein resides in the cell membrane. In terms of biological role, auxiliary subunit of the NALCN sodium channel complex. The NALCN sodium channel complex is a voltage-gated ion channel responsible for the resting Na(+) permeability that controls neuronal excitability. Activated by neuropeptides substance P, neurotensin, and extracellular calcium that regulates neuronal excitability by controlling the sizes of NALCN-dependent sodium-leak current. This is Protein unc-79 homolog (Unc79) from Mus musculus (Mouse).